The following is a 265-amino-acid chain: NAD kinase 1 (265 aa).

Asp45 functions as the Proton acceptor in the catalytic mechanism. NAD(+) contacts are provided by residues 45-46 (DG), His50, 122-123 (NE), Arg148, Asp150, and Ala185.

This sequence belongs to the NAD kinase family. A divalent metal cation is required as a cofactor.

It localises to the cytoplasm. It carries out the reaction NAD(+) + ATP = ADP + NADP(+) + H(+). Its function is as follows. Involved in the regulation of the intracellular balance of NAD and NADP, and is a key enzyme in the biosynthesis of NADP. Catalyzes specifically the phosphorylation on 2'-hydroxyl of the adenosine moiety of NAD to yield NADP. The chain is NAD kinase 1 from Halalkalibacterium halodurans (strain ATCC BAA-125 / DSM 18197 / FERM 7344 / JCM 9153 / C-125) (Bacillus halodurans).